The chain runs to 107 residues: Small ribosomal subunit protein uS10c (107 aa).

This sequence belongs to the universal ribosomal protein uS10 family. In terms of assembly, part of the 30S ribosomal subunit.

Its subcellular location is the plastid. The protein localises to the chloroplast. Functionally, involved in the binding of tRNA to the ribosomes. The chain is Small ribosomal subunit protein uS10c from Phaeodactylum tricornutum (strain CCAP 1055/1).